The following is a 313-amino-acid chain: MNTFSQVWVFSDTPSRLPELMNGAQALANQINTFVLNDADGAQAIQLGANHVWKLSGKPDERMIEDYAGVMADTIRQHGADGLVLLPNTRRGKLLAAKLGYRLNAAVSNDASAVSVQDGKATVKHMVYGGLAIGEERIATPYAVLTISSGTFDVAQPDASRTGETHTVEWQAPAVAITRTATQARQSNSVDLDKARLVVSVGRGIGSKENIALAEQLCKAIGAELACSRPVAENEKWMEHERYVGISNLMLKPELYLAVGISGQIQHMVGANASQTIFAINKDKNAPIFQYADYGIVGDAVKILPALTAALAR.

255–283 serves as a coordination point for FAD; it reads LYLAVGISGQIQHMVGANASQTIFAINKD.

Belongs to the ETF alpha-subunit/FixB family. Heterodimer of FixA and FixB.

Its pathway is amine and polyamine metabolism; carnitine metabolism. In terms of biological role, required for anaerobic carnitine reduction. May bring reductant to CaiA. The polypeptide is Protein FixB (Escherichia coli O81 (strain ED1a)).